The chain runs to 451 residues: Tubulin beta-1 chain (451 aa).

The short motif at 1–4 (MREI) is the MREI motif element. GTP is bound by residues Gln11, Glu69, Ser138, Gly142, Thr143, and Gly144. Residue Glu69 coordinates Mg(2+). Phosphoserine; by CDK1 is present on Ser172. Residues Asn204 and Asn226 each coordinate GTP. The disordered stretch occupies residues 432-451 (LEEDEEVTEEAEMEPEDKGH). The span at 433 to 451 (EEDEEVTEEAEMEPEDKGH) shows a compositional bias: acidic residues. Glu440 is subject to 5-glutamyl polyglutamate.

Belongs to the tubulin family. Dimer of alpha and beta chains. A typical microtubule is a hollow water-filled tube with an outer diameter of 25 nm and an inner diameter of 15 nM. Alpha-beta heterodimers associate head-to-tail to form protofilaments running lengthwise along the microtubule wall with the beta-tubulin subunit facing the microtubule plus end conferring a structural polarity. Microtubules usually have 13 protofilaments but different protofilament numbers can be found in some organisms and specialized cells. Interacts with RANBP10. Requires Mg(2+) as cofactor. Post-translationally, some glutamate residues at the C-terminus are polyglutamylated, resulting in polyglutamate chains on the gamma-carboxyl group. Polyglutamylation plays a key role in microtubule severing by spastin (SPAST). SPAST preferentially recognizes and acts on microtubules decorated with short polyglutamate tails: severing activity by SPAST increases as the number of glutamates per tubulin rises from one to eight, but decreases beyond this glutamylation threshold. Glutamylation is also involved in cilia motility. In terms of processing, some glutamate residues at the C-terminus are monoglycylated but not polyglycylated due to the absence of functional TTLL10 in human. Monoglycylation is mainly limited to tubulin incorporated into cilia and flagella axonemes, which is required for their stability and maintenance. Flagella glycylation controls sperm motility. Both polyglutamylation and monoglycylation can coexist on the same protein on adjacent residues, and lowering glycylation levels increases polyglutamylation, and reciprocally. Phosphorylated on Ser-172 by CDK1 during the cell cycle, from metaphase to telophase, but not in interphase. This phosphorylation inhibits tubulin incorporation into microtubules. Hematopoietic cell-specific. Major isotype in leukocytes, where it represents 50% of all beta-tubulins.

Its subcellular location is the cytoplasm. The protein resides in the cytoskeleton. Functionally, tubulin is the major constituent of microtubules, a cylinder consisting of laterally associated linear protofilaments composed of alpha- and beta-tubulin heterodimers. Microtubules grow by the addition of GTP-tubulin dimers to the microtubule end, where a stabilizing cap forms. Below the cap, tubulin dimers are in GDP-bound state, owing to GTPase activity of alpha-tubulin. This is Tubulin beta-1 chain (TUBB1) from Homo sapiens (Human).